Consider the following 309-residue polypeptide: Pyridoxal 5'-phosphate synthase subunit PDX1.3 (309 aa).

Residue Met-1 is modified to N-acetylmethionine. Asp-40 is a D-ribose 5-phosphate binding site. The active-site Schiff-base intermediate with D-ribose 5-phosphate is Lys-97. A D-ribose 5-phosphate-binding site is contributed by Gly-169. D-glyceraldehyde 3-phosphate is bound at residue Arg-181. D-ribose 5-phosphate-binding positions include Gly-230 and 251–252; that span reads GS.

The protein belongs to the PdxS/SNZ family. As to quaternary structure, homodimer or heterodimer with PDX1.1 or PDX1.2. Interacts with PDX2. As to expression, expressed in cotyledons, rapidly dividing root stele tissues, stems, leaves, flowers, mature pollen, and siliques.

It localises to the cytoplasm. It is found in the cell membrane. The protein localises to the membrane. It catalyses the reaction aldehydo-D-ribose 5-phosphate + D-glyceraldehyde 3-phosphate + L-glutamine = pyridoxal 5'-phosphate + L-glutamate + phosphate + 3 H2O + H(+). It participates in cofactor biosynthesis; pyridoxal 5'-phosphate biosynthesis. In terms of biological role, catalyzes the formation of pyridoxal 5'-phosphate from ribose 5-phosphate (RBP), glyceraldehyde 3-phosphate (G3P) and ammonia. The ammonia is provided by PDX2. Can also use ribulose 5-phosphate and dihydroxyacetone phosphate as substrates, resulting from enzyme-catalyzed isomerization of RBP and G3P, respectively. Also plays an indirect role in resistance to singlet oxygen-generating photosensitizers. This is Pyridoxal 5'-phosphate synthase subunit PDX1.3 (PDX13) from Arabidopsis thaliana (Mouse-ear cress).